The following is a 107-amino-acid chain: Putidaredoxin (107 aa).

One can recognise a 2Fe-2S ferredoxin-type domain in the interval 2–106 (SKVVYVSHDG…GIVVDVPDRQ (105 aa)). Positions 40, 46, 49, and 87 each coordinate [2Fe-2S] cluster.

The protein belongs to the adrenodoxin/putidaredoxin family. In terms of assembly, monomer. [2Fe-2S] cluster serves as cofactor.

Functionally, the oxidation of camphor by cytochrome P450-CAM requires the participation of a flavoprotein, putidaredoxin reductase, and an iron-sulfur protein, putidaredoxin, to mediate the transfer of electrons from NADH to P450 for oxygen activation. The chain is Putidaredoxin (camB) from Pseudomonas putida (Arthrobacter siderocapsulatus).